The following is a 303-amino-acid chain: Probable 5-dehydro-4-deoxyglucarate dehydratase (303 aa).

This sequence belongs to the DapA family.

The catalysed reaction is 5-dehydro-4-deoxy-D-glucarate + H(+) = 2,5-dioxopentanoate + CO2 + H2O. The protein operates within carbohydrate acid metabolism; D-glucarate degradation; 2,5-dioxopentanoate from D-glucarate: step 2/2. The polypeptide is Probable 5-dehydro-4-deoxyglucarate dehydratase (Agrobacterium fabrum (strain C58 / ATCC 33970) (Agrobacterium tumefaciens (strain C58))).